A 211-amino-acid polypeptide reads, in one-letter code: Probable GTP-binding protein EngB (211 aa).

The EngB-type G domain occupies 30-204 (EGFEVAFAGR…YTVLAGWMEL (175 aa)). GTP is bound by residues 38–45 (GRSNAGKS), 64–68 (GRTQL), 82–85 (DLPG), 149–152 (TKAD), and 182–185 (LFSA). The Mg(2+) site is built by Ser45 and Thr66.

This sequence belongs to the TRAFAC class TrmE-Era-EngA-EngB-Septin-like GTPase superfamily. EngB GTPase family. It depends on Mg(2+) as a cofactor.

Functionally, necessary for normal cell division and for the maintenance of normal septation. This is Probable GTP-binding protein EngB from Pseudomonas syringae pv. tomato (strain ATCC BAA-871 / DC3000).